The following is a 426-amino-acid chain: Histidine--tRNA ligase (426 aa).

The protein belongs to the class-II aminoacyl-tRNA synthetase family. As to quaternary structure, homodimer.

It is found in the cytoplasm. It catalyses the reaction tRNA(His) + L-histidine + ATP = L-histidyl-tRNA(His) + AMP + diphosphate + H(+). This is Histidine--tRNA ligase (hisS) from Streptococcus dysgalactiae subsp. equisimilis (Streptococcus equisimilis).